Consider the following 560-residue polypeptide: 2-succinylbenzoate--CoA ligase, chloroplastic/peroxisomal (560 aa).

The transit peptide at 1–15 directs the protein to the chloroplast; the sequence is MANHSRPHICQCLTR. 3 consecutive transmembrane segments (helical) span residues 69 to 89, 189 to 209, and 225 to 245; these read LFLEWLLAVALVGGVVAPLNY, GVTISHLAFITQSLAKIAIAG, and IGGLSSAMAMLMVGACHVLLP. The Microbody targeting signal signature appears at 558–560; the sequence is SSL.

The protein belongs to the ATP-dependent AMP-binding enzyme family. MenE subfamily. In terms of tissue distribution, high expression in young leaves and flowers. Not expressed in roots.

It is found in the plastid. The protein localises to the chloroplast membrane. The protein resides in the peroxisome membrane. It carries out the reaction 2-succinylbenzoate + ATP + CoA = 2-succinylbenzoyl-CoA + AMP + diphosphate. Functionally, involved in the biosynthesis of phylloquinone (vitamin K1). Converts 2-succinylbenzoate (OSB) to 2-succinylbenzoyl-CoA (OSB-CoA). The sequence is that of 2-succinylbenzoate--CoA ligase, chloroplastic/peroxisomal (AAE14) from Arabidopsis thaliana (Mouse-ear cress).